Consider the following 445-residue polypeptide: MATRIASMRFRCALFQSALTLGRNEVNIKRYVRRRRAVSGVVSVNEPTEISEGVISQTSERSSQHNNDITRNTDKSSIENPVSPNNSQPVQFSHINRQKVINLTSRTRFGEVDGLLYEKLHPGDKSLAKLARIAGSKKLREHQVVLEGKHLVCSALDAGAEAQTLYFSSVDALRELPLDKLRQTNVVKVKMEDAQVWSELDTSQEIIAIFKRPEASRLTFSEEKYGRAVPLTLICDTVRDPGNLGSVLRSAAAAGCHSVLLTKGCVDIWELKVLRAAMGAHFRLPIIPNLTWTDISNHLPKTSTVHVADNHSTTMGKHNDNTTPQKHRRPSDYGWVKGHQYQSKAHDDDDANDLCSLEDYCDENSKSLETQLYYTDWVAGHTSLIIGGETHGLSREALQLAERTSGRRLLIPMVDGVDSLNSAIAAGVLLFEGRKQLLSLEKIRV.

The N-terminal 37 residues, 1 to 37 (MATRIASMRFRCALFQSALTLGRNEVNIKRYVRRRRA), are a transit peptide targeting the mitochondrion. Disordered regions lie at residues 52-90 (EGVISQTSERSSQHNNDITRNTDKSSIENPVSPNNSQPV) and 311-334 (HSTTMGKHNDNTTPQKHRRPSDYG). Composition is skewed to polar residues over residues 54 to 70 (VISQTSERSSQHNNDIT), 78 to 90 (IENPVSPNNSQPV), and 311 to 324 (HSTTMGKHNDNTTP). S-adenosyl-L-methionine is bound by residues G387, I411, and L420.

It belongs to the class IV-like SAM-binding methyltransferase superfamily. RNA methyltransferase TrmH family.

The protein localises to the mitochondrion. The enzyme catalyses a uridine in rRNA + S-adenosyl-L-methionine = a 2'-O-methyluridine in rRNA + S-adenosyl-L-homocysteine + H(+). In terms of biological role, S-adenosyl-L-methionine-dependent 2'-O-ribose methyltransferase that catalyzes the formation of 2'-O-methylguanosine at position 1485 (Gm1485) in the mitochondrial large subunit ribosomal RNA (mtLSU rRNA), a conserved modification in the peptidyl transferase domain of the mtLSU rRNA. Also required for formation of 2'-O-methyluridine at position 1484 (Um1484) mediated by MRM2. The chain is rRNA methyltransferase 3B, mitochondrial from Danio rerio (Zebrafish).